A 161-amino-acid polypeptide reads, in one-letter code: MSQLTHINAAGEAHMVDVSTKQESVREARAQAFVVMLPQTLQMIIDGSHHKGDVFATARIAGIQAAKRTWELIPLCHPLLLSKVEVTLVAEPAHHRVRIESLCRLSGKTGVEMEALTAASVAALTIYDMCKAVQKDIVIEQCRLLSKSGGKSGDFQAVAND.

Substrate contacts are provided by residues 75–77 and 113–114; these read LCH and ME. Residue Asp128 is part of the active site.

Belongs to the MoaC family. In terms of assembly, homohexamer; trimer of dimers.

It catalyses the reaction (8S)-3',8-cyclo-7,8-dihydroguanosine 5'-triphosphate = cyclic pyranopterin phosphate + diphosphate. Its pathway is cofactor biosynthesis; molybdopterin biosynthesis. Its function is as follows. Catalyzes the conversion of (8S)-3',8-cyclo-7,8-dihydroguanosine 5'-triphosphate to cyclic pyranopterin monophosphate (cPMP). In Erwinia tasmaniensis (strain DSM 17950 / CFBP 7177 / CIP 109463 / NCPPB 4357 / Et1/99), this protein is Cyclic pyranopterin monophosphate synthase.